Here is a 707-residue protein sequence, read N- to C-terminus: B-cell lymphoma 6 protein homolog (707 aa).

Positions 32–99 constitute a BTB domain; sequence TDVVIVVSRE…MYTSRLNLRE (68 aa). Residues 275-350 are disordered; sequence HYSVPEGPKP…QPNSPTESCS (76 aa). A compositionally biased stretch (basic and acidic residues) spans 299-315; sequence KASKEEERPSSEDEIAL. A compositionally biased stretch (polar residues) spans 331–350; the sequence is SPQSPQKSDCQPNSPTESCS. S334 carries the post-translational modification Phosphoserine. A Phosphoserine; by MAPK1 modification is found at S344. Residue S362 is modified to Phosphoserine. Residues 377 to 380 are required for interaction with NuRD complex and for transcriptional repressor activity; the sequence is KKYK. At K380 the chain carries N6-acetyllysine; by EP300. Phosphoserine is present on S405. A disordered region spans residues 405-469; sequence SPRAYPAPPA…RSSSESHSPL (65 aa). Residues 409-420 are compositionally biased toward pro residues; the sequence is YPAPPACQPPME. A compositionally biased stretch (polar residues) spans 425 to 452; sequence DLQSPTKLSASGEDSTIPQASRLNNLVN. The segment covering 458-467 has biased composition (low complexity); it reads SPRSSSESHS. 6 C2H2-type zinc fingers span residues 519-542, 547-569, 575-597, 603-625, 631-653, and 659-682; these read FFCN…LQTH, YKCD…KTVH, YRCN…TRIH, YKCE…VLIH, YPCE…LRIH, and YHCE…RQKH.

In terms of assembly, homodimer. Interacts (via BTB domain) with the corepressors BCOR, NCOR1 and SMRT/NCOR2; the interactions are direct. Forms preferably ternary complexes with BCOR and SMRT/NCOR2 on target gene promoters but, on enhancer elements, interacts with SMRT/NCOR2 and HDAC3 to repress proximal gene expression. Interacts with histone deacetylases HDAC2, HDAC5 and HDAC9 (via the catalytic domain). Interacts with ZBTB7 and BCL6B. Interacts with SCF(FBXO11) complex; the interaction is independent of phosphorylation and promotes ubiquitination. Interacts (when phosphorylated) with PIN1; the interaction is required for BCL6 degradation upon genotoxic stress. Interacts with ZBTB17; inhibits ZBTB17 transcriptional activity. Interacts with CTBP1, autoinhibits its transcriptional expression. Interacts with NOTCH1 NCID and SIRT1; leads to a epigenetic repression of selective NOTCH1-target genes. Interacts (nor via BTB domain neither acetylated) with the NuRD complex components CHD4, HDAC1, MBD3 and MTA3; the interaction with MTA3 inhibits BCL6 acetylation and is required for BCL6 transpriptional repression. Phosphorylated by MAPK1 in response to antigen receptor activation at Ser-334 and Ser-344. Phosphorylated by ATM in response to genotoxic stress. Phosphorylation induces its degradation by ubiquitin/proteasome pathway. Post-translationally, polyubiquitinated. Polyubiquitinated by SCF(FBXO11), leading to its degradation by the proteasome. Ubiquitinated by the SCF(FBXL17) complex, leading to its degradation by the proteasome: ubiquitination by the SCF(FBXL17) complex takes place when aberrant BTB domain dimers are formed. In terms of processing, acetylated at Lys-380 by EP300 which inhibits the interaction with NuRD complex and the transcriptional repressor function. Deacetylated by HDAC- and SIR2-dependent pathways. In terms of tissue distribution, expressed at least in germinal center B-cells of spleen.

It localises to the nucleus. In terms of biological role, transcriptional repressor mainly required for germinal center (GC) formation and antibody affinity maturation which has different mechanisms of action specific to the lineage and biological functions. Forms complexes with different corepressors and histone deacetylases to repress the transcriptional expression of different subsets of target genes. Represses its target genes by binding directly to the DNA sequence 5'-TTCCTAGAA-3' (BCL6-binding site) or indirectly by repressing the transcriptional activity of transcription factors. In GC B-cells, represses genes that function in differentiation, inflammation, apoptosis and cell cycle control, also autoregulates its transcriptional expression and up-regulates, indirectly, the expression of some genes important for GC reactions, such as AICDA, through the repression of microRNAs expression, like miR155. An important function is to allow GC B-cells to proliferate very rapidly in response to T-cell dependent antigens and tolerate the physiological DNA breaks required for immunglobulin class switch recombination and somatic hypermutation without inducing a p53/TP53-dependent apoptotic response. In follicular helper CD4(+) T-cells (T(FH) cells), promotes the expression of T(FH)-related genes but inhibits the differentiation of T(H)1, T(H)2 and T(H)17 cells. Also required for the establishment and maintenance of immunological memory for both T- and B-cells. Suppresses macrophage proliferation through competition with STAT5 for STAT-binding motifs binding on certain target genes, such as CCL2 and CCND2. In response to genotoxic stress, controls cell cycle arrest in GC B-cells in both p53/TP53-dependedent and -independent manners. Besides, also controls neurogenesis through the alteration of the composition of NOTCH-dependent transcriptional complexes at selective NOTCH targets, such as HES5, including the recruitment of the deacetylase SIRT1 and resulting in an epigenetic silencing leading to neuronal differentiation. The sequence is that of B-cell lymphoma 6 protein homolog (Bcl6) from Mus musculus (Mouse).